We begin with the raw amino-acid sequence, 151 residues long: UPF0735 ACT domain-containing protein SERP1207 (151 aa).

The region spanning 74–149 (TLILYVNDIV…HVTKVDLISM (76 aa)) is the ACT domain.

This sequence belongs to the UPF0735 family.

The protein is UPF0735 ACT domain-containing protein SERP1207 of Staphylococcus epidermidis (strain ATCC 35984 / DSM 28319 / BCRC 17069 / CCUG 31568 / BM 3577 / RP62A).